The chain runs to 86 residues: Photosystem I reaction center subunit PsaK 1 (86 aa).

The propeptide occupies 1-8 (MLTSTLLA). A run of 2 helical transmembrane segments spans residues 14–34 (LEWS…AITF) and 60–80 (PALL…VLGL).

This sequence belongs to the PsaG/PsaK family. The cyanobacterial PSI reaction center is composed of one copy each of PsaA,B,C,D,E,F,I,J,K,L,M and X, and forms dimeric and tetrameric complexes.

It is found in the cellular thylakoid membrane. The sequence is that of Photosystem I reaction center subunit PsaK 1 (psaK1) from Nostoc sp. (strain PCC 7120 / SAG 25.82 / UTEX 2576).